The sequence spans 155 residues: Probable adenylyl-sulfate kinase (155 aa).

9 to 16 (GPSGAGKT) contributes to the ATP binding site. The Phosphoserine intermediate role is filled by Ser83. The tract at residues 134–155 (LDGEYEEPENPEVVVDTDKNDR) is disordered.

This sequence belongs to the APS kinase family.

The enzyme catalyses adenosine 5'-phosphosulfate + ATP = 3'-phosphoadenylyl sulfate + ADP + H(+). The protein operates within sulfur metabolism; hydrogen sulfide biosynthesis; sulfite from sulfate: step 2/3. Its function is as follows. Catalyzes the synthesis of activated sulfate. This is Probable adenylyl-sulfate kinase (cysC) from Archaeoglobus fulgidus (strain ATCC 49558 / DSM 4304 / JCM 9628 / NBRC 100126 / VC-16).